A 162-amino-acid polypeptide reads, in one-letter code: Cytochrome c-type biogenesis protein CcmE (162 aa).

The Cytoplasmic segment spans residues M1 to R8. A helical; Signal-anchor for type II membrane protein transmembrane segment spans residues L9–A29. Residues L30 to K162 lie on the Periplasmic side of the membrane. Positions 124 and 128 each coordinate heme. A compositionally biased stretch (basic and acidic residues) spans D139–N148. Residues D139–K162 form a disordered region.

This sequence belongs to the CcmE/CycJ family.

Its subcellular location is the cell inner membrane. Functionally, heme chaperone required for the biogenesis of c-type cytochromes. Transiently binds heme delivered by CcmC and transfers the heme to apo-cytochromes in a process facilitated by CcmF and CcmH. The polypeptide is Cytochrome c-type biogenesis protein CcmE (Pseudomonas paraeruginosa (strain DSM 24068 / PA7) (Pseudomonas aeruginosa (strain PA7))).